Consider the following 261-residue polypeptide: DNA repair protein RecO (261 aa).

The protein belongs to the RecO family.

Its function is as follows. Involved in DNA repair and RecF pathway recombination. This is DNA repair protein RecO from Pelodictyon phaeoclathratiforme (strain DSM 5477 / BU-1).